The following is a 328-amino-acid chain: Phosphate acyltransferase (328 aa).

This sequence belongs to the PlsX family. In terms of assembly, homodimer. Probably interacts with PlsY.

Its subcellular location is the cytoplasm. It carries out the reaction a fatty acyl-[ACP] + phosphate = an acyl phosphate + holo-[ACP]. The protein operates within lipid metabolism; phospholipid metabolism. In terms of biological role, catalyzes the reversible formation of acyl-phosphate (acyl-PO(4)) from acyl-[acyl-carrier-protein] (acyl-ACP). This enzyme utilizes acyl-ACP as fatty acyl donor, but not acyl-CoA. This chain is Phosphate acyltransferase, found in Staphylococcus saprophyticus subsp. saprophyticus (strain ATCC 15305 / DSM 20229 / NCIMB 8711 / NCTC 7292 / S-41).